The following is a 404-amino-acid chain: NADH-quinone oxidoreductase subunit D (404 aa).

It belongs to the complex I 49 kDa subunit family. NDH-1 is composed of 14 different subunits. Subunits NuoB, C, D, E, F, and G constitute the peripheral sector of the complex.

The protein localises to the cell inner membrane. The catalysed reaction is a quinone + NADH + 5 H(+)(in) = a quinol + NAD(+) + 4 H(+)(out). Functionally, NDH-1 shuttles electrons from NADH, via FMN and iron-sulfur (Fe-S) centers, to quinones in the respiratory chain. The immediate electron acceptor for the enzyme in this species is believed to be ubiquinone. Couples the redox reaction to proton translocation (for every two electrons transferred, four hydrogen ions are translocated across the cytoplasmic membrane), and thus conserves the redox energy in a proton gradient. The protein is NADH-quinone oxidoreductase subunit D of Leptospira borgpetersenii serovar Hardjo-bovis (strain JB197).